The sequence spans 247 residues: 5'-nucleotidase SurE (247 aa).

The a divalent metal cation site is built by Asp8, Asp9, Ser39, and Asn91.

The protein belongs to the SurE nucleotidase family. A divalent metal cation is required as a cofactor.

Its subcellular location is the cytoplasm. It catalyses the reaction a ribonucleoside 5'-phosphate + H2O = a ribonucleoside + phosphate. In terms of biological role, nucleotidase that shows phosphatase activity on nucleoside 5'-monophosphates. The protein is 5'-nucleotidase SurE of Pelobacter propionicus (strain DSM 2379 / NBRC 103807 / OttBd1).